A 408-amino-acid chain; its full sequence is Metacaspase-1B (408 aa).

A disordered region spans residues 1 to 98 (MYHRHSAPPP…PPLEAQQFGN (98 aa)). Pro residues-rich tracts occupy residues 24 to 49 (WPPP…FPPP) and 56 to 66 (SPYPTPPPHSP). Catalysis depends on residues His-199 and Cys-255.

Belongs to the peptidase C14B family.

Involved in cell death (apoptosis). Required for the apoptotic-like loss of membrane phospholipid asymmetry at stationary phase and facilitates growth under conditions of endoplasmic reticulum stress. This is Metacaspase-1B (casB) from Aspergillus fumigatus (strain CBS 144.89 / FGSC A1163 / CEA10) (Neosartorya fumigata).